The sequence spans 221 residues: Chalcone--flavanone isomerase 2 (221 aa).

Residues T50, N115, and S192 each coordinate substrate.

The protein belongs to the chalcone isomerase family.

It catalyses the reaction a chalcone = a flavanone.. It functions in the pathway secondary metabolite biosynthesis; flavonoid biosynthesis. Functionally, catalyzes the intramolecular cyclization of bicyclic chalcones into tricyclic (S)-flavanones. Responsible for the isomerization of 4,2',4',6'-tetrahydroxychalcone (also termed chalcone) into naringenin. The protein is Chalcone--flavanone isomerase 2 (CHI2) of Lotus japonicus (Lotus corniculatus var. japonicus).